The chain runs to 460 residues: uncharacterized protein (460 aa).

The TRAM domain occupies 6–64; that stretch reads PVKKNNDYEIYIDDFGNMGEGIGKIDNFTVFVKDAVKGEKVRAKIIKVNKSFAIGKLID. Cys-77, Cys-83, Cys-86, and Cys-166 together coordinate [4Fe-4S] cluster. Residues Gln-290, Tyr-319, Glu-340, and Asp-388 each contribute to the S-adenosyl-L-methionine site. Residue Cys-415 is the Nucleophile of the active site.

This sequence belongs to the class I-like SAM-binding methyltransferase superfamily. RNA M5U methyltransferase family.

This is an uncharacterized protein from Clostridium acetobutylicum (strain ATCC 824 / DSM 792 / JCM 1419 / IAM 19013 / LMG 5710 / NBRC 13948 / NRRL B-527 / VKM B-1787 / 2291 / W).